The primary structure comprises 70 residues: Small ribosomal subunit protein eS17 (70 aa).

This sequence belongs to the eukaryotic ribosomal protein eS17 family.

This Methanopyrus kandleri (strain AV19 / DSM 6324 / JCM 9639 / NBRC 100938) protein is Small ribosomal subunit protein eS17.